Consider the following 383-residue polypeptide: tRNA-specific 2-thiouridylase MnmA (383 aa).

ATP contacts are provided by residues 31–38 (GLSGGVDS) and leucine 57. Cysteine 118 serves as the catalytic Nucleophile. A disulfide bridge connects residues cysteine 118 and cysteine 217. Glycine 143 serves as a coordination point for ATP. Residues 167–169 (KDQ) are interaction with tRNA. Cysteine 217 serves as the catalytic Cysteine persulfide intermediate. Residues 322 to 323 (RY) are interaction with tRNA.

Belongs to the MnmA/TRMU family.

The protein resides in the cytoplasm. It carries out the reaction S-sulfanyl-L-cysteinyl-[protein] + uridine(34) in tRNA + AH2 + ATP = 2-thiouridine(34) in tRNA + L-cysteinyl-[protein] + A + AMP + diphosphate + H(+). Catalyzes the 2-thiolation of uridine at the wobble position (U34) of tRNA, leading to the formation of s(2)U34. The chain is tRNA-specific 2-thiouridylase MnmA from Synechococcus sp. (strain RCC307).